The primary structure comprises 213 residues: MKPYQRQFIKFALSKQVLKFGEFTLKSGRKSPYFFNAGLFNTGRDLALLGRFYAEALVDSGIEFDLLFGPAYKGIPIATTTAVALAEHHDLDLPYCFNRKEAKDHGEGGNLVGSALQGRVMLVDDVITAGTAIRESMEIIQANGATLAGVLISLDRQERGRGEISAIQEVERDYNCKVISIITLKDLIAYLEEKPEMAEHLAAVKAYREEFGV.

K26 is a 5-phospho-alpha-D-ribose 1-diphosphate binding site. Position 34 to 35 (34 to 35) interacts with orotate; that stretch reads FF. 5-phospho-alpha-D-ribose 1-diphosphate contacts are provided by residues 72–73, R99, K100, K103, H105, and 124–132; these read YK and DDVITAGTA. Positions 128 and 156 each coordinate orotate.

The protein belongs to the purine/pyrimidine phosphoribosyltransferase family. PyrE subfamily. In terms of assembly, homodimer. The cofactor is Mg(2+).

The enzyme catalyses orotidine 5'-phosphate + diphosphate = orotate + 5-phospho-alpha-D-ribose 1-diphosphate. It functions in the pathway pyrimidine metabolism; UMP biosynthesis via de novo pathway; UMP from orotate: step 1/2. Its function is as follows. Catalyzes the transfer of a ribosyl phosphate group from 5-phosphoribose 1-diphosphate to orotate, leading to the formation of orotidine monophosphate (OMP). The polypeptide is Orotate phosphoribosyltransferase (Shigella flexneri serotype 5b (strain 8401)).